The following is a 299-amino-acid chain: MLDNTRLRIAIQKSGRLSEDSRELLSRCGIKVNLHTQRLIALAENMPIDILRVRDDDIPGLVMDGVVDLGIIGENVLEEELLSRRAQGEDPRYFTLRRLDFGGCRLSLATPVDEAWNGPAALDGKRIATSYPHLLKRYLDQKGISFKSCLLNGSVEVAPRAGLADAICDLVSTGATLEANGLREVEVIYRSKACLIQRDGEMADAKQQLIDRLLTRIQGVIQARESKYIMMHAPTERLEEVVALLPGAERPTILPLAGDKQRVAMHMVSSETLFWETMEKLKALGASSILVLPIEKMME.

The protein belongs to the ATP phosphoribosyltransferase family. Long subfamily. Equilibrium between an active dimeric form, an inactive hexameric form and higher aggregates. Interconversion between the various forms is largely reversible and is influenced by the natural substrates and inhibitors of the enzyme. Mg(2+) is required as a cofactor.

The protein resides in the cytoplasm. The catalysed reaction is 1-(5-phospho-beta-D-ribosyl)-ATP + diphosphate = 5-phospho-alpha-D-ribose 1-diphosphate + ATP. The protein operates within amino-acid biosynthesis; L-histidine biosynthesis; L-histidine from 5-phospho-alpha-D-ribose 1-diphosphate: step 1/9. With respect to regulation, feedback inhibited by histidine. Catalyzes the condensation of ATP and 5-phosphoribose 1-diphosphate to form N'-(5'-phosphoribosyl)-ATP (PR-ATP). Has a crucial role in the pathway because the rate of histidine biosynthesis seems to be controlled primarily by regulation of HisG enzymatic activity. This is ATP phosphoribosyltransferase from Klebsiella pneumoniae (strain 342).